The sequence spans 398 residues: Dihydrolipoyllysine-residue succinyltransferase component of 2-oxoglutarate dehydrogenase complex (398 aa).

A Lipoyl-binding domain is found at S2 to N77. At K43 the chain carries N6-lipoyllysine. Residues I112–I149 enclose the Peripheral subunit-binding (PSBD) domain. Residues H369 and D373 contribute to the active site.

The protein belongs to the 2-oxoacid dehydrogenase family. Forms a 24-polypeptide structural core with octahedral symmetry. Part of the 2-oxoglutarate dehydrogenase (OGDH) complex composed of E1 (2-oxoglutarate dehydrogenase), E2 (dihydrolipoamide succinyltransferase) and E3 (dihydrolipoamide dehydrogenase); the complex contains multiple copies of the three enzymatic components (E1, E2 and E3). (R)-lipoate serves as cofactor.

It catalyses the reaction N(6)-[(R)-dihydrolipoyl]-L-lysyl-[protein] + succinyl-CoA = N(6)-[(R)-S(8)-succinyldihydrolipoyl]-L-lysyl-[protein] + CoA. Its pathway is amino-acid degradation; L-lysine degradation via saccharopine pathway; glutaryl-CoA from L-lysine: step 6/6. Functionally, E2 component of the 2-oxoglutarate dehydrogenase (OGDH) complex which catalyzes the second step in the conversion of 2-oxoglutarate to succinyl-CoA and CO(2). The protein is Dihydrolipoyllysine-residue succinyltransferase component of 2-oxoglutarate dehydrogenase complex (sucB) of Rickettsia typhi (strain ATCC VR-144 / Wilmington).